The primary structure comprises 317 residues: Melanocyte-stimulating hormone receptor (317 aa).

Topologically, residues 1 to 37 are extracellular; the sequence is MAVQGSQRRLLGSLNSTPTAIPQLGLAANQTGARCLE. The N-linked (GlcNAc...) asparagine glycan is linked to asparagine 29. The helical transmembrane segment at 38–63 threads the bilayer; it reads VSISDGLFLSLGLVSLVENALVVATI. Residues 64 to 72 lie on the Cytoplasmic side of the membrane; it reads AKNRNLHSP. Residues 73 to 93 form a helical membrane-spanning segment; the sequence is MYCFICCLALSDLLVSGSNVL. Residues 94 to 118 are Extracellular-facing; that stretch reads ETAVILLLEAGALVARAAVLQQLDN. Residues 119 to 140 traverse the membrane as a helical segment; it reads VIDVITCSSMLSSLCFLGAIAV. The Cytoplasmic segment spans residues 141–163; it reads DRYISIFYALRYHSIVTLPRARR. The helical transmembrane segment at 164-183 threads the bilayer; that stretch reads AVAAIWVASVVFSTLFIAYY. The Extracellular segment spans residues 184-191; the sequence is DHVAVLLC. A helical membrane pass occupies residues 192-211; sequence LVVFFLAMLVLMAVLYVHML. Residues 212-240 lie on the Cytoplasmic side of the membrane; that stretch reads ARACQHAQGIARLHKRQRPVHQGFGLKGA. A helical membrane pass occupies residues 241 to 266; sequence VTLTILLGIFFLCWGPFFLHLTLIVL. Topologically, residues 267-279 are extracellular; sequence CPEHPTCGCIFKN. A helical transmembrane segment spans residues 280-300; it reads FNLFLALIICNAIIDPLIYAF. The Cytoplasmic portion of the chain corresponds to 301-317; sequence HSQELRRTLKEVLTCSW. The S-palmitoyl cysteine moiety is linked to residue cysteine 315.

It belongs to the G-protein coupled receptor 1 family. As to quaternary structure, interacts with MGRN1, but does not undergo MGRN1-mediated ubiquitination; this interaction competes with GNAS-binding and thus inhibits agonist-induced cAMP production. Interacts with OPN3; the interaction results in a decrease in MC1R-mediated cAMP signaling and ultimately a decrease in melanin production in melanocytes. As to expression, expressed in melanocytes. Expressed in corticoadrenal tissue.

The protein resides in the cell membrane. Receptor for MSH (alpha, beta and gamma) and ACTH. The activity of this receptor is mediated by G proteins which activate adenylate cyclase. Mediates melanogenesis, the production of eumelanin (black/brown) and phaeomelanin (red/yellow), via regulation of cAMP signaling in melanocytes. This chain is Melanocyte-stimulating hormone receptor (MC1R), found in Homo sapiens (Human).